The primary structure comprises 162 residues: UPF0114 protein Psyr_4257 (162 aa).

Transmembrane regions (helical) follow at residues leucine 15 to phenylalanine 35, leucine 53 to valine 73, valine 109 to threonine 129, and leucine 136 to leucine 156.

The protein belongs to the UPF0114 family.

The protein localises to the cell membrane. This chain is UPF0114 protein Psyr_4257, found in Pseudomonas syringae pv. syringae (strain B728a).